Reading from the N-terminus, the 222-residue chain is Secreted protein D (222 aa).

The signal sequence occupies residues 1–22; it reads MKIYYLFFVLIYLIYFINLVYC. A glycan (N-linked (GlcNAc...) asparagine) is linked at N25.

The protein belongs to the Sct family.

The protein localises to the secreted. This is Secreted protein D from Dictyostelium discoideum (Social amoeba).